The following is a 47-amino-acid chain: Fasciclin-like arabinogalactan protein (47 aa).

One can recognise an FAS1 domain in the interval 1–47; sequence APTPATLNGLTIFAPNDEAFKATGVPDLSKLSNAPMVSLLQYHAAAR.

The protein belongs to the fasciclin-like AGP family.

May be a cell surface adhesion protein. In Jatropha curcas (Barbados nut), this protein is Fasciclin-like arabinogalactan protein.